The chain runs to 121 residues: ATP synthase epsilon chain (121 aa).

The protein belongs to the ATPase epsilon chain family. F-type ATPases have 2 components, CF(1) - the catalytic core - and CF(0) - the membrane proton channel. CF(1) has five subunits: alpha(3), beta(3), gamma(1), delta(1), epsilon(1). CF(0) has three main subunits: a, b and c.

It is found in the cell membrane. Its function is as follows. Produces ATP from ADP in the presence of a proton gradient across the membrane. The protein is ATP synthase epsilon chain (atpC) of Mycobacterium bovis (strain ATCC BAA-935 / AF2122/97).